The chain runs to 208 residues: ATP-dependent Clp protease proteolytic subunit (208 aa).

The active-site Nucleophile is the Ser-107. His-132 is an active-site residue.

Belongs to the peptidase S14 family. As to quaternary structure, fourteen ClpP subunits assemble into 2 heptameric rings which stack back to back to give a disk-like structure with a central cavity, resembling the structure of eukaryotic proteasomes.

Its subcellular location is the cytoplasm. It carries out the reaction Hydrolysis of proteins to small peptides in the presence of ATP and magnesium. alpha-casein is the usual test substrate. In the absence of ATP, only oligopeptides shorter than five residues are hydrolyzed (such as succinyl-Leu-Tyr-|-NHMec, and Leu-Tyr-Leu-|-Tyr-Trp, in which cleavage of the -Tyr-|-Leu- and -Tyr-|-Trp bonds also occurs).. Functionally, cleaves peptides in various proteins in a process that requires ATP hydrolysis. Has a chymotrypsin-like activity. Plays a major role in the degradation of misfolded proteins. In Methylorubrum populi (strain ATCC BAA-705 / NCIMB 13946 / BJ001) (Methylobacterium populi), this protein is ATP-dependent Clp protease proteolytic subunit.